The following is a 495-amino-acid chain: UDP-N-acetylmuramoyl-L-alanyl-D-glutamate--2,6-diaminopimelate ligase (495 aa).

Ser-29 contributes to the UDP-N-acetyl-alpha-D-muramoyl-L-alanyl-D-glutamate binding site. Residue 111 to 117 (GTNGKTS) coordinates ATP. UDP-N-acetyl-alpha-D-muramoyl-L-alanyl-D-glutamate contacts are provided by residues 153–154 (TT), Ser-180, Gln-186, and Arg-188. Lys-220 carries the post-translational modification N6-carboxylysine. Residues Arg-384, 408-411 (DNPR), Gly-459, and Glu-463 each bind meso-2,6-diaminopimelate. The Meso-diaminopimelate recognition motif signature appears at 408-411 (DNPR).

Belongs to the MurCDEF family. MurE subfamily. Mg(2+) serves as cofactor. Post-translationally, carboxylation is probably crucial for Mg(2+) binding and, consequently, for the gamma-phosphate positioning of ATP.

It is found in the cytoplasm. The catalysed reaction is UDP-N-acetyl-alpha-D-muramoyl-L-alanyl-D-glutamate + meso-2,6-diaminopimelate + ATP = UDP-N-acetyl-alpha-D-muramoyl-L-alanyl-gamma-D-glutamyl-meso-2,6-diaminopimelate + ADP + phosphate + H(+). Its pathway is cell wall biogenesis; peptidoglycan biosynthesis. Catalyzes the addition of meso-diaminopimelic acid to the nucleotide precursor UDP-N-acetylmuramoyl-L-alanyl-D-glutamate (UMAG) in the biosynthesis of bacterial cell-wall peptidoglycan. The sequence is that of UDP-N-acetylmuramoyl-L-alanyl-D-glutamate--2,6-diaminopimelate ligase from Xanthomonas campestris pv. campestris (strain 8004).